The chain runs to 179 residues: ADP-ribosylation factor-like protein 5A (179 aa).

Gly-2 carries the N-myristoyl glycine lipid modification. Residues 23-30 (GLDNAGKT), 66-70 (DIGGQ), 125-128 (NKQD), and Ala-159 contribute to the GTP site.

It belongs to the small GTPase superfamily. Arf family.

In terms of biological role, lacks ADP-ribosylation enhancing activity. This is ADP-ribosylation factor-like protein 5A (Arl5a) from Mus musculus (Mouse).